The following is a 372-amino-acid chain: 4-hydroxy-3-methylbut-2-en-1-yl diphosphate synthase (flavodoxin) (372 aa).

Positions 270, 273, 305, and 312 each coordinate [4Fe-4S] cluster.

The protein belongs to the IspG family. [4Fe-4S] cluster is required as a cofactor.

The enzyme catalyses (2E)-4-hydroxy-3-methylbut-2-enyl diphosphate + oxidized [flavodoxin] + H2O + 2 H(+) = 2-C-methyl-D-erythritol 2,4-cyclic diphosphate + reduced [flavodoxin]. It participates in isoprenoid biosynthesis; isopentenyl diphosphate biosynthesis via DXP pathway; isopentenyl diphosphate from 1-deoxy-D-xylulose 5-phosphate: step 5/6. In terms of biological role, converts 2C-methyl-D-erythritol 2,4-cyclodiphosphate (ME-2,4cPP) into 1-hydroxy-2-methyl-2-(E)-butenyl 4-diphosphate. This chain is 4-hydroxy-3-methylbut-2-en-1-yl diphosphate synthase (flavodoxin), found in Shigella dysenteriae serotype 1 (strain Sd197).